A 351-amino-acid polypeptide reads, in one-letter code: uncharacterized protein (351 aa).

Mn(2+)-binding residues include Asp215, Asp226, His290, Glu319, and Glu333.

It belongs to the peptidase M24B family. It depends on Mn(2+) as a cofactor.

This is an uncharacterized protein from Staphylococcus aureus (strain bovine RF122 / ET3-1).